A 189-amino-acid polypeptide reads, in one-letter code: uncharacterized protein (189 aa).

Transmembrane regions (helical) follow at residues 2-22, 93-113, and 116-136; these read LVVVSLTPPVGVCVGLFHHLL, ILFYFYFVLILFYFIALYFIL, and FYSTILFFFPLFIKCSHLHTL.

It localises to the membrane. This is an uncharacterized protein from Schizosaccharomyces pombe (strain 972 / ATCC 24843) (Fission yeast).